A 506-amino-acid polypeptide reads, in one-letter code: tRNA (guanine(6)-N(2))-methyltransferase THUMP3 (506 aa).

Positions 144 to 172 (KTKRRKLNPNSSKQKIDNGRGDTTVEKDV) are disordered. Residues 157–172 (QKIDNGRGDTTVEKDV) are compositionally biased toward basic and acidic residues. One can recognise a THUMP domain in the interval 170–286 (KDVKKELTNS…DNEVVVGIAL (117 aa)).

The protein belongs to the methyltransferase superfamily. In terms of assembly, part of the heterodimeric THUMPD3-TRM112 methyltransferase complex; this complex forms an active tRNA methyltransferase, where TRMT112 acts as an activator of the catalytic subunit THUMPD3.

Its subcellular location is the cytoplasm. The catalysed reaction is guanosine(6) in tRNA + S-adenosyl-L-methionine = N(2)-methylguanosine(6) in tRNA + S-adenosyl-L-homocysteine + H(+). It carries out the reaction guanosine(7) in tRNA + S-adenosyl-L-methionine = N(2)-methylguanosine(7) in tRNA + S-adenosyl-L-homocysteine + H(+). In terms of biological role, catalytic subunit of the THUMPD3-TRM112 methyltransferase complex, that specifically mediates the S-adenosyl-L-methionine-dependent N(2)-methylation of guanosine nucleotide at position 6 (m2G6) in tRNAs. This is one of the major tRNA (guanine-N(2))-methyltransferases. Also catalyzes the S-adenosyl-L-methionine-dependent N(2)-methylation of guanosine nucleotide at position 7 of tRNA(Trp). The sequence is that of tRNA (guanine(6)-N(2))-methyltransferase THUMP3 from Bos taurus (Bovine).